Consider the following 207-residue polypeptide: Small ribosomal subunit protein uS4 (207 aa).

An S4 RNA-binding domain is found at 98-164 (RRLDNVVYRM…AKFKNLVEVN (67 aa)).

Belongs to the universal ribosomal protein uS4 family. Part of the 30S ribosomal subunit. Contacts protein S5. The interaction surface between S4 and S5 is involved in control of translational fidelity.

Functionally, one of the primary rRNA binding proteins, it binds directly to 16S rRNA where it nucleates assembly of the body of the 30S subunit. With S5 and S12 plays an important role in translational accuracy. This is Small ribosomal subunit protein uS4 from Clostridioides difficile (strain 630) (Peptoclostridium difficile).